Consider the following 389-residue polypeptide: MEQVVIVDAIRTPMGRSKGGAFRNVRAEDLSAHLMRSLLARNPALEATAIDDIYWGCVQQTLEQGFNIARNAALLAEIPHSVPAVTVNRLCGSSMQALHDAARMIMTGDAQTCLIGGVEHMGHVPMSHGVDFHPGLSRNVAKAAGMMGLTAEMLSRMHGISREMQDAFAARSHARAWAATQSGAFKNEIIPTGGHDADGVLKQFSYDEVIRPETTVEALSTLRPAFDPVSGTVTAGTSSALSDGAAAMLVMSESRARELGLQPRARIRSMAVVGCDPSIMGYGPVPASKLALKKAGLAASDIDLFEMNEAFAAQILPCIKDLGLMEQIDEKINLNGGAIALGHPLGCSGARISTTLLNLMERKDAQFGLATMCIGLGQGIATVFERVQS.

Cys-91 serves as the catalytic Acyl-thioester intermediate. Active-site proton acceptor residues include His-343 and Cys-373.

Belongs to the thiolase-like superfamily. Thiolase family. In terms of assembly, heterotetramer of two alpha chains (FadB) and two beta chains (FadA).

It is found in the cytoplasm. The catalysed reaction is an acyl-CoA + acetyl-CoA = a 3-oxoacyl-CoA + CoA. Its pathway is lipid metabolism; fatty acid beta-oxidation. Its function is as follows. Catalyzes the final step of fatty acid oxidation in which acetyl-CoA is released and the CoA ester of a fatty acid two carbons shorter is formed. The polypeptide is 3-ketoacyl-CoA thiolase (Citrobacter koseri (strain ATCC BAA-895 / CDC 4225-83 / SGSC4696)).